The sequence spans 498 residues: Glycerol kinase (498 aa).

ADP is bound at residue threonine 12. Positions 12, 13, and 14 each coordinate ATP. Threonine 12 provides a ligand contact to sn-glycerol 3-phosphate. Residue arginine 16 coordinates ADP. Positions 82, 83, 134, and 244 each coordinate sn-glycerol 3-phosphate. 5 residues coordinate glycerol: arginine 82, glutamate 83, tyrosine 134, aspartate 244, and glutamine 245. ADP-binding residues include threonine 266 and glycine 310. Residues threonine 266, glycine 310, glutamine 314, and glycine 411 each coordinate ATP. Positions 411 and 415 each coordinate ADP.

It belongs to the FGGY kinase family.

It catalyses the reaction glycerol + ATP = sn-glycerol 3-phosphate + ADP + H(+). The protein operates within polyol metabolism; glycerol degradation via glycerol kinase pathway; sn-glycerol 3-phosphate from glycerol: step 1/1. Inhibited by fructose 1,6-bisphosphate (FBP). In terms of biological role, key enzyme in the regulation of glycerol uptake and metabolism. Catalyzes the phosphorylation of glycerol to yield sn-glycerol 3-phosphate. The protein is Glycerol kinase of Chloroflexus aurantiacus (strain ATCC 29366 / DSM 635 / J-10-fl).